The chain runs to 355 residues: 3-dehydroquinate synthase (355 aa).

NAD(+) contacts are provided by residues Glu-71–Lys-76, Gly-105–Asp-109, Thr-129–Ser-130, Lys-142, and Lys-151. 3 residues coordinate Zn(2+): Glu-184, His-246, and His-263.

This sequence belongs to the sugar phosphate cyclases superfamily. Dehydroquinate synthase family. Requires Co(2+) as cofactor. Zn(2+) is required as a cofactor. The cofactor is NAD(+).

The protein resides in the cytoplasm. It carries out the reaction 7-phospho-2-dehydro-3-deoxy-D-arabino-heptonate = 3-dehydroquinate + phosphate. It functions in the pathway metabolic intermediate biosynthesis; chorismate biosynthesis; chorismate from D-erythrose 4-phosphate and phosphoenolpyruvate: step 2/7. Functionally, catalyzes the conversion of 3-deoxy-D-arabino-heptulosonate 7-phosphate (DAHP) to dehydroquinate (DHQ). The chain is 3-dehydroquinate synthase from Streptococcus pneumoniae (strain Hungary19A-6).